The following is a 337-amino-acid chain: Probable E3 ubiquitin-protein ligase LUL1 (337 aa).

Glycine 2 carries N-myristoyl glycine lipidation. The tract at residues 139–255 is DAR2 domain; that stretch reads FTFDASMPGR…GEIKIEVVKQ (117 aa). The segment at 285-324 adopts an RING-type; atypical zinc-finger fold; sequence CVVCLSEPRDTTVLPCRHMCMCSGCAKALRFQTNLCPVCR.

Belongs to the RING-type zinc finger family. LOG2 subfamily. In terms of processing, myristoylated (in vitro).

It catalyses the reaction S-ubiquitinyl-[E2 ubiquitin-conjugating enzyme]-L-cysteine + [acceptor protein]-L-lysine = [E2 ubiquitin-conjugating enzyme]-L-cysteine + N(6)-ubiquitinyl-[acceptor protein]-L-lysine.. It participates in protein modification; protein ubiquitination. Acts as an E3 ubiquitin-protein ligase, or as part of E3 complex, which accepts ubiquitin from specific E2 ubiquitin-conjugating enzymes and then transfers it to substrates (in vitro). The sequence is that of Probable E3 ubiquitin-protein ligase LUL1 (LUL1) from Arabidopsis thaliana (Mouse-ear cress).